A 364-amino-acid polypeptide reads, in one-letter code: tRNA 2-selenouridine synthase (364 aa).

The 124-residue stretch at 14–137 folds into the Rhodanese domain; the sequence is LLADTPLIDV…LRQTAIQATW (124 aa). Cysteine 97 acts as the S-selanylcysteine intermediate in catalysis.

This sequence belongs to the SelU family. Monomer.

The enzyme catalyses 5-methylaminomethyl-2-thiouridine(34) in tRNA + selenophosphate + (2E)-geranyl diphosphate + H2O + H(+) = 5-methylaminomethyl-2-selenouridine(34) in tRNA + (2E)-thiogeraniol + phosphate + diphosphate. It catalyses the reaction 5-methylaminomethyl-2-thiouridine(34) in tRNA + (2E)-geranyl diphosphate = 5-methylaminomethyl-S-(2E)-geranyl-thiouridine(34) in tRNA + diphosphate. The catalysed reaction is 5-methylaminomethyl-S-(2E)-geranyl-thiouridine(34) in tRNA + selenophosphate + H(+) = 5-methylaminomethyl-2-(Se-phospho)selenouridine(34) in tRNA + (2E)-thiogeraniol. It carries out the reaction 5-methylaminomethyl-2-(Se-phospho)selenouridine(34) in tRNA + H2O = 5-methylaminomethyl-2-selenouridine(34) in tRNA + phosphate. Involved in the post-transcriptional modification of the uridine at the wobble position (U34) of tRNA(Lys), tRNA(Glu) and tRNA(Gln). Catalyzes the conversion of 2-thiouridine (S2U-RNA) to 2-selenouridine (Se2U-RNA). Acts in a two-step process involving geranylation of 2-thiouridine (S2U) to S-geranyl-2-thiouridine (geS2U) and subsequent selenation of the latter derivative to 2-selenouridine (Se2U) in the tRNA chain. The chain is tRNA 2-selenouridine synthase from Salmonella dublin (strain CT_02021853).